The chain runs to 502 residues: Probable ADP-dependent glucokinase (502 aa).

Residues 1–32 (MFSETFVPSIFSYKHRLLHLSVLFFIVPYWYS) form the signal peptide. Residues 44–497 (SVETAMFLSW…LLYSQFYRLN (454 aa)) form the ADPK domain. N-linked (GlcNAc...) asparagine glycans are attached at residues asparagine 89 and asparagine 190. Mg(2+) is bound by residues glutamate 290, glutamate 320, and aspartate 481. Aspartate 481 acts as the Proton acceptor in catalysis.

The protein belongs to the ADP-dependent glucokinase family. In terms of assembly, monomer. Requires Mg(2+) as cofactor.

The protein resides in the secreted. It catalyses the reaction D-glucose + ADP = D-glucose 6-phosphate + AMP + H(+). The protein operates within carbohydrate degradation; glycolysis. Its function is as follows. Catalyzes the phosphorylation of D-glucose to D-glucose 6-phosphate using ADP as the phosphate donor. GDP and CDP can replace ADP, but with reduced efficiency. This Caenorhabditis elegans protein is Probable ADP-dependent glucokinase.